A 461-amino-acid polypeptide reads, in one-letter code: Kynurenine 3-monooxygenase (461 aa).

A run of 2 helical transmembrane segments spans residues 395–415 (TIMNSIFPKSWIPLYSMVTFS) and 432–452 (ILSRIMTTTSTLALIGAAAGI).

Belongs to the aromatic-ring hydroxylase family. KMO subfamily. FAD is required as a cofactor.

It is found in the mitochondrion. The protein localises to the membrane. It carries out the reaction L-kynurenine + NADPH + O2 + H(+) = 3-hydroxy-L-kynurenine + NADP(+) + H2O. It participates in cofactor biosynthesis; NAD(+) biosynthesis; quinolinate from L-kynurenine: step 1/3. Catalyzes the hydroxylation of L-kynurenine (L-Kyn) to form 3-hydroxy-L-kynurenine (L-3OHKyn). Required for synthesis of quinolinic acid. This Caenorhabditis elegans protein is Kynurenine 3-monooxygenase.